Here is a 30-residue protein sequence, read N- to C-terminus: Ornithine carbamoyltransferase, catabolic (30 aa).

Belongs to the aspartate/ornithine carbamoyltransferase superfamily. OTCase family.

It is found in the cytoplasm. The catalysed reaction is carbamoyl phosphate + L-ornithine = L-citrulline + phosphate + H(+). Its pathway is amino-acid degradation; L-arginine degradation via ADI pathway; carbamoyl phosphate from L-arginine: step 2/2. The protein is Ornithine carbamoyltransferase, catabolic (arcB) of Aeromonas caviae (Aeromonas punctata).